Consider the following 505-residue polypeptide: Cholesteryl ester transfer protein (505 aa).

Positions 1 to 24 (MLWAGGMRLGMARILLMLVHAAAA) are cleaved as a signal peptide. Asn-68 and Asn-114 each carry an N-linked (GlcNAc...) asparagine glycan. Residues Cys-169 and Cys-210 are joined by a disulfide bond. Residues Asn-266, Asn-344, and Asn-422 are each glycosylated (N-linked (GlcNAc...) asparagine).

Belongs to the BPI/LBP/Plunc superfamily. BPI/LBP family. In terms of tissue distribution, highly expressed in liver brain, heart, and spleen. Secreted in plasma.

Its subcellular location is the secreted. It carries out the reaction cholesteryl (9Z-octadecenoate)(in) = cholesteryl (9Z-octadecenoate)(out). The catalysed reaction is 1,2,3-tri-(9Z-octadecenoyl)-glycerol(in) = 1,2,3-tri-(9Z-octadecenoyl)-glycerol(out). The enzyme catalyses cholesteryl (9Z,12Z)-octadecadienoate(in) = cholesteryl (9Z,12Z)-octadecadienoate(out). Functionally, involved in the transfer of neutral lipids, including cholesteryl ester and triglyceride, among lipoprotein particles. Allows the net movement of cholesteryl ester from high density lipoproteins/HDL to triglyceride-rich very low density lipoproteins/VLDL, and the equimolar transport of triglyceride from VLDL to HDL. Regulates the reverse cholesterol transport, by which excess cholesterol is removed from peripheral tissues and returned to the liver for elimination. This Gallus gallus (Chicken) protein is Cholesteryl ester transfer protein.